The primary structure comprises 373 residues: RNA 3'-terminal phosphate cyclase-like protein (373 aa).

This sequence belongs to the RNA 3'-terminal cyclase family. Type 2 subfamily. Part of the small subunit (SSU) processome, composed of more than 70 proteins and the RNA chaperone small nucleolar RNA (snoRNA) U3. Interacts with BMS1.

The protein resides in the nucleus. Its subcellular location is the nucleolus. Its function is as follows. As part of the small subunit (SSU) processome, it plays a role in 40S-ribosomal-subunit biogenesis in the early pre-rRNA processing steps at sites A0, A1 and A2 that are required for proper maturation of the 18S RNA. Activates BMS1 by promoting GDP/GTP exchange. Does not have cyclase activity. The chain is RNA 3'-terminal phosphate cyclase-like protein (Rcl1) from Mus musculus (Mouse).